The chain runs to 143 residues: UPF0179 protein PTO0851 (143 aa).

This sequence belongs to the UPF0179 family.

The chain is UPF0179 protein PTO0851 from Picrophilus torridus (strain ATCC 700027 / DSM 9790 / JCM 10055 / NBRC 100828 / KAW 2/3).